The primary structure comprises 626 residues: Nuclear receptor subfamily 4 group A member 3 (626 aa).

Residues 1–108 form an activation function (AF)-1 domain region; it reads MPCVQAQYSP…HHHHHHHHHH (108 aa). The segment at 1–138 is required for DNA-PK heterotrimer; sequence MPCVQAQYSP…PSTSMYFKQS (138 aa). An interaction with NCOA1, NCOA2, NCOA3 and KAT2B region spans residues 1–291; that stretch reads MPCVQAQYSP…SRSSSSGEGT (291 aa). Disordered regions lie at residues 92–152, 192–211, and 265–284; these read PSYH…PPQA, HFKP…GHHL, and PTAS…PSRS. Over residues 93–110 the composition is skewed to basic residues; sequence SYHHHHHHHHHHHHHHQQ. Pro residues-rich tracts occupy residues 140–149 and 195–204; these read PSTPTTPAFP and PSPPHPPAPS. A compositionally biased stretch (low complexity) spans 268–284; it reads SSLLGESPSLPSPPSRS. The segment at residues 289–364 is a DNA-binding region (nuclear receptor); it reads EGTCAVCGDN…VGMVKEVVRT (76 aa). 2 NR C4-type zinc fingers span residues 292-312 and 328-352; these read CAVC…CEGC and CLAN…FQKC. The tract at residues 364-394 is disordered; sequence TDSLKGRRGRLPSKPKSPLQQEPSQPSPPSP. Positions 377 to 387 are enriched in low complexity; that stretch reads KPKSPLQQEPS. The segment at 379–626 is interaction with KAT2B; it reads KSPLQQEPSQ…DKLFLDTLPF (248 aa). The NR LBD domain maps to 394–623; sequence PPICMMNALV…SIIDKLFLDT (230 aa).

The protein belongs to the nuclear hormone receptor family. NR4 subfamily. Interacts with SIX3 (via homeobox); differentially regulates the transcriptional activities of NR4A3. Interacts with the constituents of DNA-PK heterotrimer PRKDC, XRCC6 and XRCC5; phosphorylates and prevents NR4A3 ubiquitinylation and degradation. Interacts with NCOA2; potentiates the activity of the NR4A3. Interacts with NCOA1, NCOA3, MED1 and KAT2B. Interacts with EP300 and NCOA2; mediates the recruitment of MED1 in the coactivator complex. Interacts with NR3C1 (via nuclear receptor DNA-binding domain); the interactions represses transcription activity of NR4A3 on the POMC promoter Nur response element (NurRE). Interacts with TRIM28; the interactions potentiates NR4A3 activity on NurRE promoter. Binds DNA as a monomer and homodimer. Interacts with PARP1; activates PARP1 by improving acetylation of PARP1 and suppressing the interaction between PARP1 and SIRT1. Phosphorylated by PRKDC. In terms of tissue distribution, isoform alpha is highly expressed in skeletal muscle. Isoform beta is highly expressed in skeletal muscle and low expressed in fetal brain and placenta.

Its subcellular location is the nucleus. Transcriptional activator that binds to regulatory elements in promoter regions in a cell- and response element (target)-specific manner. Induces gene expression by binding as monomers to the NR4A1 response element (NBRE) 5'-AAAAGGTCA-3' site and as homodimers to the Nur response element (NurRE) site in the promoter of their regulated target genes. Plays a role in the regulation of proliferation, survival and differentiation of many different cell types and also in metabolism and inflammation. Mediates proliferation of vascular smooth muscle, myeloid progenitor cell and type B pancreatic cells; promotes mitogen-induced vascular smooth muscle cell proliferation through transactivation of SKP2 promoter by binding a NBRE site. Upon PDGF stimulation, stimulates vascular smooth muscle cell proliferation by regulating CCND1 and CCND2 expression. In islets, induces type B pancreatic cell proliferation through up-regulation of genes that activate cell cycle, as well as genes that cause degradation of the CDKN1A. Negatively regulates myeloid progenitor cell proliferation by repressing RUNX1 in a NBRE site-independent manner. During inner ear, plays a role as a key mediator of the proliferative growth phase of semicircular canal development. Also mediates survival of neuron and smooth muscle cells; mediates CREB-induced neuronal survival, and during hippocampus development, plays a critical role in pyramidal cell survival and axonal guidance. Is required for S phase entry of the cell cycle and survival of smooth muscle cells by inducing CCND1, resulting in RB1 phosphorylation. Binds to NBRE motif in CCND1 promoter, resulting in the activation of the promoter and CCND1 transcription. Also plays a role in inflammation; upon TNF stimulation, mediates monocyte adhesion by inducing the expression of VCAM1 and ICAM1 by binding to the NBRE consensus site. In mast cells activated by Fc-epsilon receptor cross-linking, promotes the synthesis and release of cytokines but impairs events leading to degranulation. Also plays a role in metabolism; by modulating feeding behavior; and by playing a role in energy balance by inhibiting the glucocorticoid-induced orexigenic neuropeptides AGRP expression, at least in part by forming a complex with activated NR3C1 on the AGRP- glucocorticoid response element (GRE), and thus weakening the DNA binding activity of NR3C1. Upon catecholamines stimulation, regulates gene expression that controls oxidative metabolism in skeletal muscle. Plays a role in glucose transport by regulating translocation of the SLC2A4 glucose transporter to the cell surface. Finally, during gastrulation plays a crucial role in the formation of anterior mesoderm by controlling cell migration. Inhibits adipogenesis. Also participates in cardiac hypertrophy by activating PARP1. The sequence is that of Nuclear receptor subfamily 4 group A member 3 (NR4A3) from Homo sapiens (Human).